A 515-amino-acid polypeptide reads, in one-letter code: Maturase K (515 aa).

This sequence belongs to the intron maturase 2 family. MatK subfamily.

It is found in the plastid. Its subcellular location is the chloroplast. In terms of biological role, usually encoded in the trnK tRNA gene intron. Probably assists in splicing its own and other chloroplast group II introns. The chain is Maturase K from Pinus clausa (Sand pine).